Consider the following 310-residue polypeptide: Upstream stimulatory factor 1 (310 aa).

Positions 1-17 (MKGQQKTAETEEGTVQI) are enriched in polar residues. Disordered regions lie at residues 1–26 (MKGQ…ATGE) and 171–209 (QGGS…EVER). A compositionally biased stretch (basic and acidic residues) spans 194–209 (TTRDEKRRAQHNEVER). The 56-residue stretch at 199 to 254 (KRRAQHNEVERRRRDKINNWIVQLSKIIPDCSMESTKSGQSKGGILSKACDYIQEL) folds into the bHLH domain. Residues 271 to 292 (LQLDNDVLRQQVEDLKNKNLLL) form a leucine-zipper region. Lys306 participates in a covalent cross-link: Glycyl lysine isopeptide (Lys-Gly) (interchain with G-Cter in SUMO2).

As to quaternary structure, efficient DNA binding requires dimerization with another bHLH protein. Binds DNA as a homodimer or a heterodimer (USF1/USF2).

It localises to the nucleus. In terms of biological role, transcription factor that binds to a symmetrical DNA sequence (E-boxes) (5'-CACGTG-3') that is found in a variety of viral and cellular promoters. Regulates the expression of the surfactant protein-A (SP-A) gene. The protein is Upstream stimulatory factor 1 (USF1) of Oryctolagus cuniculus (Rabbit).